Reading from the N-terminus, the 205-residue chain is Ribosomal RNA small subunit methyltransferase G 1 (205 aa).

S-adenosyl-L-methionine is bound by residues glycine 77, leucine 82, 100–102 (EKS), 129–130 (LE), and arginine 138.

The protein belongs to the methyltransferase superfamily. RNA methyltransferase RsmG family.

Its subcellular location is the cytoplasm. It catalyses the reaction guanosine(527) in 16S rRNA + S-adenosyl-L-methionine = N(7)-methylguanosine(527) in 16S rRNA + S-adenosyl-L-homocysteine. Its function is as follows. Specifically methylates the N7 position of guanine in position 527 of 16S rRNA. The polypeptide is Ribosomal RNA small subunit methyltransferase G 1 (Bdellovibrio bacteriovorus (strain ATCC 15356 / DSM 50701 / NCIMB 9529 / HD100)).